A 484-amino-acid chain; its full sequence is Glutamate--tRNA ligase (484 aa).

The 'HIGH' region signature appears at 11–21 (PSPTGYPHLGN). Zn(2+) is bound by residues Cys108, Cys110, Cys135, and Asp137. A 'KMSKS' region motif is present at residues 245–249 (KLSKR). Lys248 provides a ligand contact to ATP.

The protein belongs to the class-I aminoacyl-tRNA synthetase family. Glutamate--tRNA ligase type 1 subfamily. In terms of assembly, monomer. The cofactor is Zn(2+).

It is found in the cytoplasm. The catalysed reaction is tRNA(Glu) + L-glutamate + ATP = L-glutamyl-tRNA(Glu) + AMP + diphosphate. Its function is as follows. Catalyzes the attachment of glutamate to tRNA(Glu) in a two-step reaction: glutamate is first activated by ATP to form Glu-AMP and then transferred to the acceptor end of tRNA(Glu). This chain is Glutamate--tRNA ligase, found in Dehalococcoides mccartyi (strain ATCC BAA-2266 / KCTC 15142 / 195) (Dehalococcoides ethenogenes (strain 195)).